The following is a 446-amino-acid chain: 3-phosphoshikimate 1-carboxyvinyltransferase (446 aa).

3 residues coordinate 3-phosphoshikimate: Lys-27, Ser-28, and Arg-32. Lys-27 serves as a coordination point for phosphoenolpyruvate. The phosphoenolpyruvate site is built by Gly-100 and Arg-128. Positions 177, 179, 330, and 357 each coordinate 3-phosphoshikimate. A phosphoenolpyruvate-binding site is contributed by Gln-179. The active-site Proton acceptor is Asp-330. Positions 361 and 406 each coordinate phosphoenolpyruvate.

The protein belongs to the EPSP synthase family. Monomer.

The protein resides in the cytoplasm. The enzyme catalyses 3-phosphoshikimate + phosphoenolpyruvate = 5-O-(1-carboxyvinyl)-3-phosphoshikimate + phosphate. It participates in metabolic intermediate biosynthesis; chorismate biosynthesis; chorismate from D-erythrose 4-phosphate and phosphoenolpyruvate: step 6/7. Catalyzes the transfer of the enolpyruvyl moiety of phosphoenolpyruvate (PEP) to the 5-hydroxyl of shikimate-3-phosphate (S3P) to produce enolpyruvyl shikimate-3-phosphate and inorganic phosphate. In Sphingopyxis alaskensis (strain DSM 13593 / LMG 18877 / RB2256) (Sphingomonas alaskensis), this protein is 3-phosphoshikimate 1-carboxyvinyltransferase.